Consider the following 616-residue polypeptide: Proline dehydrogenase 1, mitochondrial (616 aa).

The protein belongs to the proline oxidase family. FAD serves as cofactor.

It is found in the mitochondrion matrix. The catalysed reaction is L-proline + a quinone = (S)-1-pyrroline-5-carboxylate + a quinol + H(+). The protein operates within amino-acid degradation; L-proline degradation into L-glutamate; L-glutamate from L-proline: step 1/2. Functionally, converts proline to delta-1-pyrroline-5-carboxylate. Through proline catabolism, promotes reactive oxygen species (ROS) production and the transcription of skn-1 target genes in response to bacterial infection by P.aeruginosa. The protein is Proline dehydrogenase 1, mitochondrial of Caenorhabditis elegans.